A 591-amino-acid polypeptide reads, in one-letter code: Cytidine monophosphate-N-acetylneuraminic acid hydroxylase (591 aa).

The Rieske domain maps to 16–114; sequence LASAEVESLK…IENDDENGVS (99 aa). Positions 56, 58, 77, and 80 each coordinate [2Fe-2S] cluster.

Belongs to the CMP-Neu5Ac hydroxylase family. It depends on [2Fe-2S] cluster as a cofactor.

It is found in the cytoplasm. The enzyme catalyses CMP-N-acetyl-beta-neuraminate + 2 Fe(II)-[cytochrome b5] + O2 + 2 H(+) = CMP-N-glycoloyl-beta-neuraminate + 2 Fe(III)-[cytochrome b5] + H2O. Its pathway is amino-sugar metabolism; N-acetylneuraminate metabolism. Sialic acids are components of carbohydrate chains of glycoconjugates and are involved in cell-cell recognition and cell-pathogen interactions. Catalyzes the conversion of CMP-N-acetylneuraminic acid (CMP-Neu5Ac) into its hydroxylated derivative CMP-N-glycolylneuraminic acid (CMP-Neu5Gc), a sialic acid abundantly expressed at the surface of many cells. The protein is Cytidine monophosphate-N-acetylneuraminic acid hydroxylase (cmah) of Xenopus laevis (African clawed frog).